We begin with the raw amino-acid sequence, 527 residues long: MASDFLPVRRALLSVSDKTGLIDLARALVARNVELLSTGGTAKAIREAGLPVKDVAELTGFPEMMDGRVKTLHPLVHGGLLGRAGIDEAVMAEHGIAPIDLLVLNLYPFESVTVKTDCTLADAVENIDIGGPAMLRSAAKNFARVAVATDPAQYADLLAELEANNGQLSAAKRFALSVAAFNRVAQYDAAISNYLSAVADSAETVPTRNPFPAQINSNFVKVMDLRYGENPHQSGAFYRDLYPVPGTLATFQQLQGKELSYNNLADADAAWECVRQFDAPACVIVKHANPCGVAVGAGCGDAYELAYATDPTSAFGGILAFNKTLDAATAKAILDRQFVEVLIAPDYDAGALEYATKKANVRVLKIPHGNGLNNYDTKRIGSGLLMQSADNRGMSLGELSVVTQRAPSEAELGDLLFAWRVAKYVKSNAIVYAKDSRTIGVGAGQMSRVVSAKIAALKAEEAKLTVAGSVMASDAFFPFRDGIDAAASAGIQAVIQPGGSMRDGEVIAAADEHGIAMVFTGVRHFRH.

One can recognise an MGS-like domain in the interval 1-149 (MASDFLPVRR…KNFARVAVAT (149 aa)).

It belongs to the PurH family.

The enzyme catalyses (6R)-10-formyltetrahydrofolate + 5-amino-1-(5-phospho-beta-D-ribosyl)imidazole-4-carboxamide = 5-formamido-1-(5-phospho-D-ribosyl)imidazole-4-carboxamide + (6S)-5,6,7,8-tetrahydrofolate. It carries out the reaction IMP + H2O = 5-formamido-1-(5-phospho-D-ribosyl)imidazole-4-carboxamide. It functions in the pathway purine metabolism; IMP biosynthesis via de novo pathway; 5-formamido-1-(5-phospho-D-ribosyl)imidazole-4-carboxamide from 5-amino-1-(5-phospho-D-ribosyl)imidazole-4-carboxamide (10-formyl THF route): step 1/1. Its pathway is purine metabolism; IMP biosynthesis via de novo pathway; IMP from 5-formamido-1-(5-phospho-D-ribosyl)imidazole-4-carboxamide: step 1/1. In Xanthomonas oryzae pv. oryzae (strain PXO99A), this protein is Bifunctional purine biosynthesis protein PurH.